We begin with the raw amino-acid sequence, 359 residues long: 3-dehydroquinate synthase (359 aa).

NAD(+) contacts are provided by residues 71–76, 105–109, 129–130, Lys142, Lys151, and 169–172; these read DGEAYK, GVIGD, TT, and TLGT. 3 residues coordinate Zn(2+): Glu184, His247, and His264.

Belongs to the sugar phosphate cyclases superfamily. Dehydroquinate synthase family. Co(2+) serves as cofactor. It depends on Zn(2+) as a cofactor. The cofactor is NAD(+).

The protein localises to the cytoplasm. The catalysed reaction is 7-phospho-2-dehydro-3-deoxy-D-arabino-heptonate = 3-dehydroquinate + phosphate. It participates in metabolic intermediate biosynthesis; chorismate biosynthesis; chorismate from D-erythrose 4-phosphate and phosphoenolpyruvate: step 2/7. Functionally, catalyzes the conversion of 3-deoxy-D-arabino-heptulosonate 7-phosphate (DAHP) to dehydroquinate (DHQ). In Thiobacillus denitrificans (strain ATCC 25259 / T1), this protein is 3-dehydroquinate synthase.